A 1357-amino-acid chain; its full sequence is DNA-directed RNA polymerase subunit beta (1357 aa).

Belongs to the RNA polymerase beta chain family. The RNAP catalytic core consists of 2 alpha, 1 beta, 1 beta' and 1 omega subunit. When a sigma factor is associated with the core the holoenzyme is formed, which can initiate transcription.

It catalyses the reaction RNA(n) + a ribonucleoside 5'-triphosphate = RNA(n+1) + diphosphate. Its function is as follows. DNA-dependent RNA polymerase catalyzes the transcription of DNA into RNA using the four ribonucleoside triphosphates as substrates. This Nitrosospira multiformis (strain ATCC 25196 / NCIMB 11849 / C 71) protein is DNA-directed RNA polymerase subunit beta.